The sequence spans 568 residues: Type 2 DNA topoisomerase 6 subunit B (568 aa).

ATP contacts are provided by residues Asn-46, Asp-78, 99–100 (TK), 109–116 (GQQGIGIS), and Lys-473.

This sequence belongs to the TOP6B family. In terms of assembly, homodimer. Heterotetramer of two Top6A and two Top6B chains.

It carries out the reaction ATP-dependent breakage, passage and rejoining of double-stranded DNA.. Relaxes both positive and negative superturns and exhibits a strong decatenase activity. The polypeptide is Type 2 DNA topoisomerase 6 subunit B (Pyrococcus furiosus (strain ATCC 43587 / DSM 3638 / JCM 8422 / Vc1)).